The sequence spans 369 residues: MNKRPRDEPSSSFASAPKRQYGAGGGGYGGHGYSEERSSARRVADHYSARSNQTLEERENSPIIHLKKLNNWIKSVLIQLYAHPGDCVLDLACGKGGDLIKWDKAKVGYYVGVDIAEGSIKDCMTRYNGDTDQQRRKKFSFPARLICADCYEARLDEHLYEDAPFDICSCQFALHYSWSTEARARQALANVSALLRPGGVFIGTMPDANVIIKRLRETDGMEFGNGVYWISFGEEYAEKKFPASRPFGIKYKFHLEDAVDCPEWVVPFHLFKLLAEEYDLELVLTKNFHEFVHEYLQKPEFAELMRRLGALGDGRQDQSTLSQDEWEVAYLYLAFVLRKRGQPPSQRRANNANRGKMFLTENDIDFLGV.

The tract at residues 1-55 (MNKRPRDEPSSSFASAPKRQYGAGGGGYGGHGYSEERSSARRVADHYSARSNQTL) is disordered. A compositionally biased stretch (gly residues) spans 22–32 (GAGGGGYGGHG). Basic and acidic residues predominate over residues 33-48 (YSEERSSARRVADHYS). The 280-residue stretch at 61-340 (SPIIHLKKLN…LYLAFVLRKR (280 aa)) folds into the mRNA cap 0 methyltransferase domain. 70–71 (NN) is an mRNA binding site. S-adenosyl-L-methionine-binding positions include lysine 74, alanine 92, aspartate 114, 149–150 (DC), and 171–173 (QFA).

This sequence belongs to the class I-like SAM-binding methyltransferase superfamily. mRNA cap 0 methyltransferase family.

The protein resides in the nucleus. The catalysed reaction is a 5'-end (5'-triphosphoguanosine)-ribonucleoside in mRNA + S-adenosyl-L-methionine = a 5'-end (N(7)-methyl 5'-triphosphoguanosine)-ribonucleoside in mRNA + S-adenosyl-L-homocysteine. Functionally, mRNA-capping methyltransferase that methylates the N7 position of the added guanosine to the 5'-cap structure of mRNAs. Binds RNA containing 5'-terminal GpppC. This is mRNA cap guanine-N(7) methyltransferase 1 from Oryza sativa subsp. japonica (Rice).